The sequence spans 215 residues: MEIKKLNHKNRYKILKMFSNIYINFKTGLVFTSNFELLISVMLSAQTTDRMVNKTTQRLFGIANTPSGFISIGLHAIRENIRKLGLYNKKSSNILRTCEILLKRYGGKVPNNREDLESLPGVGRKTANVILNVIFKKKTIAVDTHVFRLCNRIGFAKGTTVLTVEKKLLNIVPEKFKLNFHAWFIMHGRYICTSRVPKCSKCIISSLCEFKDKNI.

The HhH domain maps to 113-132; it reads REDLESLPGVGRKTANVILN. The [4Fe-4S] cluster site is built by cysteine 192, cysteine 199, cysteine 202, and cysteine 208.

The protein belongs to the Nth/MutY family. Requires [4Fe-4S] cluster as cofactor.

The enzyme catalyses 2'-deoxyribonucleotide-(2'-deoxyribose 5'-phosphate)-2'-deoxyribonucleotide-DNA = a 3'-end 2'-deoxyribonucleotide-(2,3-dehydro-2,3-deoxyribose 5'-phosphate)-DNA + a 5'-end 5'-phospho-2'-deoxyribonucleoside-DNA + H(+). Functionally, DNA repair enzyme that has both DNA N-glycosylase activity and AP-lyase activity. The DNA N-glycosylase activity releases various damaged pyrimidines from DNA by cleaving the N-glycosidic bond, leaving an AP (apurinic/apyrimidinic) site. The AP-lyase activity cleaves the phosphodiester bond 3' to the AP site by a beta-elimination, leaving a 3'-terminal unsaturated sugar and a product with a terminal 5'-phosphate. In Buchnera aphidicola subsp. Baizongia pistaciae (strain Bp), this protein is Endonuclease III.